The sequence spans 201 residues: Superoxide dismutase [Mn] (201 aa).

His-27, His-81, Asp-163, and His-167 together coordinate Mn(2+).

The protein belongs to the iron/manganese superoxide dismutase family. Homodimer. It depends on Mn(2+) as a cofactor.

The protein resides in the secreted. The enzyme catalyses 2 superoxide + 2 H(+) = H2O2 + O2. Destroys superoxide anion radicals which are normally produced within the cells and which are toxic to biological systems. This is Superoxide dismutase [Mn] (sodA) from Streptococcus pyogenes serotype M1.